The chain runs to 517 residues: Intermediate filament family orphan 2 (517 aa).

The region spanning 53–484 is the IF rod domain; the sequence is NIHLLKGLNV…RLIKGSADRN (432 aa). Disordered stretches follow at residues 104–129, 330–349, and 478–517; these read EQAVQTGPELLRPPAPGGGHGLSSGA, KVASDDDISEQDGEVNRFSD, and KGSADRNSPSPSSVASSDSGSTDEIQDEFEREADVEPMVS. Residues 485-497 show a composition bias toward low complexity; it reads SPSPSSVASSDSG. The segment covering 501-517 has biased composition (acidic residues); sequence EIQDEFEREADVEPMVS.

Belongs to the intermediate filament family.

The polypeptide is Intermediate filament family orphan 2 (IFFO2) (Homo sapiens (Human)).